The chain runs to 365 residues: Zinc transporter 7 (365 aa).

Residues 1–26 (MAYSKACYKLTTITILLLSFTLPSLA) form the signal peptide. Over 27–56 (GNAENADVSECKAESGDLSCHNNKEAQKLK) the chain is Extracellular. A helical membrane pass occupies residues 57–77 (IIAIPSILVASMIGVSLPLFS). The Cytoplasmic portion of the chain corresponds to 78 to 90 (RSIPALGPDREMS). The helical transmembrane segment at 91–111 (VIVKTLASGVILATGFMHVLP) threads the bilayer. Residues 112-129 (DSFDDLTSKCLPEDPWQK) lie on the Extracellular side of the membrane. Residues 130–150 (FPFATFITMISALLVLMIESF) traverse the membrane as a helical segment. The Cytoplasmic portion of the chain corresponds to 151–210 (AMCAYARRTSKREGEVVPLENGSNSVDTQNDIQTLENGSSYVEKQEKVNEDKTSELLRNK). The helical transmembrane segment at 211–231 (VIAQILELGIVVHSVVIGLAM) threads the bilayer. The Extracellular portion of the chain corresponds to 232 to 242 (GASDNKCTVQS). The helical transmembrane segment at 243-263 (LIAALCFHQLFEGMGLGGSIL) threads the bilayer. The Cytoplasmic portion of the chain corresponds to 264–272 (QAQFKSKTN). The chain crosses the membrane as a helical span at residues 273–293 (WTMVFFFSVTTPFGIVLGMAI). The Extracellular portion of the chain corresponds to 294-304 (QKIYDETSPTA). A helical membrane pass occupies residues 305–325 (LIVVGVLNACSAGLLIYMALV). At 326 to 344 (NLLAHEFFGPKIQGNIKLH) the chain is on the cytoplasmic side. Residues 345–365 (VLGYVATFTGAAGMSLMAKWA) form a helical membrane-spanning segment.

It belongs to the ZIP transporter (TC 2.A.5) family.

It localises to the cell membrane. Probably mediates zinc uptake from the rhizosphere. The sequence is that of Zinc transporter 7 (ZIP7) from Arabidopsis thaliana (Mouse-ear cress).